The sequence spans 428 residues: Protein clpf-1 (428 aa).

ATP contacts are provided by Glu-16 and Arg-56. The interval 99 to 118 is disordered; that stretch reads KKREEQAVSNSSKPKGPRLL. 124–129 serves as a coordination point for ATP; it reads DVGKTT.

The protein belongs to the Clp1 family. Clp1 subfamily.

Its subcellular location is the nucleus. Functionally, required for endonucleolytic cleavage during polyadenylation-dependent pre-mRNA 3'-end formation. This Caenorhabditis briggsae protein is Protein clpf-1.